The sequence spans 275 residues: NH(3)-dependent NAD(+) synthetase (275 aa).

Position 50–57 (50–57 (GISGGVDS)) interacts with ATP. Mg(2+) is bound at residue D56. R147 is a deamido-NAD(+) binding site. T167 contacts ATP. E172 serves as a coordination point for Mg(2+). Deamido-NAD(+) contacts are provided by K180 and D187. 2 residues coordinate ATP: K196 and T218. Deamido-NAD(+) is bound at residue 267-268 (HK).

It belongs to the NAD synthetase family. In terms of assembly, homodimer.

The catalysed reaction is deamido-NAD(+) + NH4(+) + ATP = AMP + diphosphate + NAD(+) + H(+). The protein operates within cofactor biosynthesis; NAD(+) biosynthesis; NAD(+) from deamido-NAD(+) (ammonia route): step 1/1. In terms of biological role, catalyzes the ATP-dependent amidation of deamido-NAD to form NAD. Uses ammonia as a nitrogen source. The polypeptide is NH(3)-dependent NAD(+) synthetase (Pseudomonas aeruginosa (strain LESB58)).